We begin with the raw amino-acid sequence, 369 residues long: Tetraacyldisaccharide 4'-kinase (369 aa).

68 to 75 serves as a coordination point for ATP; it reads VVGGTGKT.

This sequence belongs to the LpxK family.

The enzyme catalyses a lipid A disaccharide + ATP = a lipid IVA + ADP + H(+). Its pathway is glycolipid biosynthesis; lipid IV(A) biosynthesis; lipid IV(A) from (3R)-3-hydroxytetradecanoyl-[acyl-carrier-protein] and UDP-N-acetyl-alpha-D-glucosamine: step 6/6. Its function is as follows. Transfers the gamma-phosphate of ATP to the 4'-position of a tetraacyldisaccharide 1-phosphate intermediate (termed DS-1-P) to form tetraacyldisaccharide 1,4'-bis-phosphate (lipid IVA). The chain is Tetraacyldisaccharide 4'-kinase from Chlamydia trachomatis serovar D (strain ATCC VR-885 / DSM 19411 / UW-3/Cx).